A 182-amino-acid polypeptide reads, in one-letter code: Hexose transport activator protein (182 aa).

Positions 46–65 (GIWGPMEKKPGGVGKKKGSE) are disordered.

In terms of biological role, multicopy expression suppresses glucose-uptake defects in various yeast mutants. The sequence is that of Hexose transport activator protein (AHT1) from Saccharomyces cerevisiae (strain ATCC 204508 / S288c) (Baker's yeast).